The following is a 626-amino-acid chain: Solute carrier family 13 member 4 (626 aa).

Helical transmembrane passes span Leu-13–Ser-33, Ala-52–Leu-72, Val-77–Ala-97, and Val-113–Leu-133. Positions Ser-217–His-228 are enriched in polar residues. The disordered stretch occupies residues Ser-217–Leu-252. A run of 8 helical transmembrane segments spans residues Tyr-274 to Leu-294, Phe-309 to Phe-329, Ile-372 to Thr-392, Ala-414 to Phe-434, Ile-466 to Ser-486, Leu-499 to Val-519, Pro-543 to Gly-563, and Val-590 to Leu-610.

This sequence belongs to the SLC13A/DASS transporter (TC 2.A.47) family. NADC subfamily. Highly expressed in placenta and testis with intermediate levels in brain and lower levels in heart, thymus and liver.

Its subcellular location is the membrane. The catalysed reaction is sulfate(out) + 3 Na(+)(out) = sulfate(in) + 3 Na(+)(in). Transport is inhibited by thiosulfate, phosphate, molybdate, selenate and tungstate. Not inhibited by oxalate, citrate, succinate, phenol red or 4,4'-diisothiocyanostilbene-2,2'-disulfonic acid (DIDS). Sodium:sulfate symporter that mediates sulfate reabsorption in the high endothelial venules (HEV). The protein is Solute carrier family 13 member 4 (SLC13A4) of Homo sapiens (Human).